The chain runs to 947 residues: Receptor-like protein 56 (947 aa).

An N-terminal signal peptide occupies residues 1–27 (MEGKVFSGQKLILVMLLLGHLHGFSSC). Residues 28-899 (IEKERKALLE…EDDKEVAIDM (872 aa)) are Extracellular-facing. Residues asparagine 60, asparagine 75, and asparagine 98 are each glycosylated (N-linked (GlcNAc...) asparagine). 9 LRR repeats span residues 105–128 (FEEVRSLDLSNSRLNGLVDDVEGY), 134–157 (LRNLQILNFSSNEFNNSIFPFLNA), 159–182 (TSLTTLSLRRNNMYGPIPLKELKN), 183–207 (LTNLELLDLSGNRIDGSMPVREFPY), 209–232 (KKLKALDLSSNGIYSSMEWQGLKN), 233–257 (LTNLEVLSLGYNYFDGPIPIEVFCE), 259–281 (KNLQELDLRGINFVGQLPLCFGN), 282–305 (LNKLRFLDLSSNQLTGNIPPSFSS), and 307–330 (ESLEYLSLSDNSFEGFFSLNPLTN). 3 N-linked (GlcNAc...) asparagine glycosylation sites follow: asparagine 141, asparagine 148, and asparagine 182. N-linked (GlcNAc...) asparagine glycosylation is present at asparagine 232. Asparagine 330 is a glycosylation site (N-linked (GlcNAc...) asparagine). Residues 332-356 (TKLKVFIFSSKDDMVQVKIESTWQP) form an LRR 10; degenerate repeat. 18 LRR repeats span residues 357 to 380 (LFQLSVLVLRLCSLEKIPNFLMYQ), 381 to 404 (KNLHVVDLSGNRISGIIPTWLLEN), 405 to 427 (NPELEVLQLKNNSFTIFQMPTSV), 428 to 450 (HNLQVLDFSENNIGGLFPDNFGR), 452 to 476 (LPNLVHMNGSNNGFQGNFPSSMGEM), 477 to 500 (YNISFLDLSYNNLSGELPQSFVSS), 502 to 527 (FSLSILQLSHNKFSGHFLPRQTNFTS), 529 to 549 (IVLRINNNLFTGKIGVGLLTL), 550 to 575 (VDLCILDMSNNFLEGELPPLLLVFEY), 577 to 598 (NFLDLSGNLLSGALPSHVSLDN), 600 to 616 (LFLHNNNFTGPIPDTFL), 617 to 640 (GSIQILDLRNNKLSGNIPQFVDTQ), 642 to 663 (ISFLLLRGNSLTGYIPSTLCEF), 664 to 686 (SKMRLLDLSDNKLNGFIPSCFNN), 757 to 780 (LNSMYGLDLSSNELSGVIPAELGD), 781 to 804 (LFKLRALNLSHNFLSSHIPDSFSK), 805 to 829 (LQDIESLDLSYNMLQGSIPHQLTNL), and 831 to 854 (SLAIFNVSYNNLSGIIPQGKQFNT). A glycan (N-linked (GlcNAc...) asparagine) is linked at asparagine 415. Residues asparagine 459, asparagine 478, asparagine 488, and asparagine 524 are each glycosylated (N-linked (GlcNAc...) asparagine). The N-linked (GlcNAc...) asparagine glycan is linked to asparagine 606. Asparagine 686 is a glycosylation site (N-linked (GlcNAc...) asparagine). Asparagine 788, asparagine 828, asparagine 836, and asparagine 841 each carry an N-linked (GlcNAc...) asparagine glycan. The chain crosses the membrane as a helical span at residues 900–920 (LVFYWSTAGTYVTALIGILVL). The Cytoplasmic portion of the chain corresponds to 921–947 (MCVDCSWRRAWLRLVDAFIASAKSKLA).

Belongs to the RLP family.

The protein localises to the cell membrane. The polypeptide is Receptor-like protein 56 (Arabidopsis thaliana (Mouse-ear cress)).